The chain runs to 62 residues: Large ribosomal subunit protein uL29 (62 aa).

Belongs to the universal ribosomal protein uL29 family.

This is Large ribosomal subunit protein uL29 from Cytophaga hutchinsonii (strain ATCC 33406 / DSM 1761 / CIP 103989 / NBRC 15051 / NCIMB 9469 / D465).